Reading from the N-terminus, the 345-residue chain is tRNA-dihydrouridine(20/20a) synthase (345 aa).

FMN contacts are provided by residues 32-34 (PML) and Gln84. The active-site Proton donor is Cys114. Residues Lys153, His186, 226 to 228 (NGG), and 248 to 249 (GR) each bind FMN.

The protein belongs to the Dus family. DusA subfamily. Requires FMN as cofactor.

The catalysed reaction is 5,6-dihydrouridine(20) in tRNA + NADP(+) = uridine(20) in tRNA + NADPH + H(+). It catalyses the reaction 5,6-dihydrouridine(20) in tRNA + NAD(+) = uridine(20) in tRNA + NADH + H(+). The enzyme catalyses 5,6-dihydrouridine(20a) in tRNA + NADP(+) = uridine(20a) in tRNA + NADPH + H(+). It carries out the reaction 5,6-dihydrouridine(20a) in tRNA + NAD(+) = uridine(20a) in tRNA + NADH + H(+). Catalyzes the synthesis of 5,6-dihydrouridine (D), a modified base found in the D-loop of most tRNAs, via the reduction of the C5-C6 double bond in target uridines. Specifically modifies U20 and U20a in tRNAs. The chain is tRNA-dihydrouridine(20/20a) synthase from Escherichia coli O157:H7.